The sequence spans 503 residues: Aromatase (503 aa).

Substrate is bound by residues aspartate 309 and methionine 374. A heme-binding site is contributed by cysteine 437.

This sequence belongs to the cytochrome P450 family. Requires heme as cofactor.

It localises to the membrane. The enzyme catalyses testosterone + 3 reduced [NADPH--hemoprotein reductase] + 3 O2 = 17beta-estradiol + formate + 3 oxidized [NADPH--hemoprotein reductase] + 4 H2O + 4 H(+). It carries out the reaction androst-4-ene-3,17-dione + 3 reduced [NADPH--hemoprotein reductase] + 3 O2 = estrone + formate + 3 oxidized [NADPH--hemoprotein reductase] + 4 H2O + 4 H(+). In terms of biological role, catalyzes the formation of aromatic C18 estrogens from C19 androgens. The sequence is that of Aromatase (CYP19A1) from Callithrix jacchus (White-tufted-ear marmoset).